The primary structure comprises 711 residues: Hepatocyte growth factor-like protein (711 aa).

The first 18 residues, 1-18 (MGWLPLLLLLTQCLGVPG), serve as a signal peptide directing secretion. A PAN domain is found at 21 to 105 (SPLNDFQVLR…GRCDLFQKKD (85 aa)). 20 disulfide bridges follow: Cys56–Cys78, Cys60–Cys66, Cys110–Cys186, Cys131–Cys169, Cys157–Cys181, Cys191–Cys268, Cys194–Cys324, Cys212–Cys251, Cys240–Cys263, Cys283–Cys361, Cys304–Cys343, Cys332–Cys355, Cys370–Cys448, Cys391–Cys431, Cys419–Cys443, Cys468–Cys588, Cys507–Cys523, Cys602–Cys667, Cys632–Cys646, and Cys657–Cys685. Asn72 is a glycosylation site (N-linked (GlcNAc...) asparagine). 4 consecutive Kringle domains span residues 110 to 186 (CIMN…IKSC), 191 to 268 (CVWC…LPRC), 283 to 361 (CFRG…IRRC), and 370 to 448 (CYHG…LRRC). The N-linked (GlcNAc...) asparagine glycan is linked to Asn296. Residues 484-709 (VVGGHPGNSP…FVDWIHKVMR (226 aa)) enclose the Peptidase S1 domain. A glycan (N-linked (GlcNAc...) asparagine) is linked at Asn615.

This sequence belongs to the peptidase S1 family. Plasminogen subfamily. Dimer of an alpha chain and a beta chain linked by a disulfide bond. Interacts (via beta chain) with MST1R (via SEMA domain). Cleaved after Arg-483, probably by HPN/Hepsin, to yield the active form consisting of two disulfide-linked chains.

It is found in the secreted. This is Hepatocyte growth factor-like protein (MST1) from Homo sapiens (Human).